We begin with the raw amino-acid sequence, 166 residues long: MFIKGVILSSYGVNGYARIKSISNNFCDFINLKNNKVLLKKSNGFAIEVKVIDVNIKSNSLFLKFEGIDAPESVKPLIGFELWVDDSLASSLKEGEYYLGKLIGYTIVNDNRKLGEVVAFFEYLNNVFLEVKVGIKFFFIPFLSIYIGNIDAREKTIELKVLDLLR.

The 72-residue stretch at 94–165 (EGEYYLGKLI…TIELKVLDLL (72 aa)) folds into the PRC barrel domain.

Belongs to the RimM family. In terms of assembly, binds ribosomal protein uS19.

It is found in the cytoplasm. Its function is as follows. An accessory protein needed during the final step in the assembly of 30S ribosomal subunit, possibly for assembly of the head region. Essential for efficient processing of 16S rRNA. May be needed both before and after RbfA during the maturation of 16S rRNA. It has affinity for free ribosomal 30S subunits but not for 70S ribosomes. This chain is Ribosome maturation factor RimM, found in Borreliella afzelii (strain PKo) (Borrelia afzelii).